Reading from the N-terminus, the 738-residue chain is Platelet endothelial cell adhesion molecule (738 aa).

The first 27 residues, Met1 to Gly27, serve as a signal peptide directing secretion. Residues Gln28–Lys601 are Extracellular-facing. Ig-like C2-type domains are found at residues Asn35–Ala121, Gly145–Phe233, and Pro236–Ser315. N-linked (GlcNAc...) asparagine glycosylation is found at Asn52, Asn84, and Asn151. A disulfide bond links Cys57 and Cys109. 2 cysteine pairs are disulfide-bonded: Cys152-Cys206 and Cys256-Cys304. 6 N-linked (GlcNAc...) asparagine glycosylation sites follow: Asn301, Asn320, Asn344, Asn356, Asn453, and Asn551. Ig-like C2-type domains are found at residues Pro328–Gln401, Gly424–Arg493, and Pro499–Thr591. 3 disulfides stabilise this stretch: Cys347–Cys386, Cys431–Cys476, and Cys523–Cys572. A helical membrane pass occupies residues Gly602–Ala620. The Cytoplasmic segment spans residues Lys621–Thr738. Residue Cys622 is the site of S-palmitoyl cysteine attachment. A disordered region spans residues Glu658 to Glu715. Over residues Ser686–Ala698 the composition is skewed to polar residues. 2 short sequence motifs (ITIM motif) span residues Val688 to Val693 and Thr711 to Val716. 2 positions are modified to phosphotyrosine; by FER: Tyr690 and Tyr713. Positions Glu699–Glu715 are enriched in basic and acidic residues. The segment at Thr709–Ser729 is membrane-bound segment which detaches upon phosphorylation. The interval Pro721–Thr738 is may play a role in cytoprotective signaling. Phosphoserine occurs at positions 729 and 734.

Trans-homodimer (via Ig-like C2-type 1 and Ig-like C2-type 2 domains); trans-homodimerization is required for cell-cell interaction. Forms a complex with BDKRB2 and GNAQ. Interacts with BDKRB2 and GNAQ. Interacts with PTPN11; Tyr-713 is critical for PTPN11 recruitment. Interacts with FER. Interacts (via Ig-like C2-type domain 6) with CD177; the interaction is Ca(2+)-dependent; the interaction is direct. Post-translationally, phosphorylated on Ser and Tyr residues after cellular activation by src kinases. Upon activation, phosphorylated on Ser-729 which probably initiates the dissociation of the membrane-interaction segment (residues 709-729) from the cell membrane allowing the sequential phosphorylation of Tyr-713 and Tyr-690. Constitutively phosphorylated on Ser-734 in resting platelets. Phosphorylated on tyrosine residues by FER and FES in response to FCER1 activation. In endothelial cells Fyn mediates mechanical-force (stretch or pull) induced tyrosine phosphorylation. In terms of processing, palmitoylation by ZDHHC21 is necessary for cell surface expression in endothelial cells and enrichment in membrane rafts. As to expression, expressed on platelets and leukocytes and is primarily concentrated at the borders between endothelial cells. Expressed in human umbilical vein endothelial cells (HUVECs) (at protein level). Expressed on neutrophils (at protein level). Isoform Long predominates in all tissues examined. Isoform Delta12 is detected only in trachea. Isoform Delta14-15 is only detected in lung. Isoform Delta14 is detected in all tissues examined with the strongest expression in heart. Isoform Delta15 is expressed in brain, testis, ovary, cell surface of platelets, human umbilical vein endothelial cells (HUVECs), Jurkat T-cell leukemia, human erythroleukemia (HEL) and U-937 histiocytic lymphoma cell lines (at protein level).

It localises to the cell membrane. It is found in the membrane raft. The protein localises to the cell junction. Functionally, cell adhesion molecule which is required for leukocyte transendothelial migration (TEM) under most inflammatory conditions. Tyr-690 plays a critical role in TEM and is required for efficient trafficking of PECAM1 to and from the lateral border recycling compartment (LBRC) and is also essential for the LBRC membrane to be targeted around migrating leukocytes. Trans-homophilic interaction may play a role in endothelial cell-cell adhesion via cell junctions. Heterophilic interaction with CD177 plays a role in transendothelial migration of neutrophils. Homophilic ligation of PECAM1 prevents macrophage-mediated phagocytosis of neighboring viable leukocytes by transmitting a detachment signal. Promotes macrophage-mediated phagocytosis of apoptotic leukocytes by tethering them to the phagocytic cells; PECAM1-mediated detachment signal appears to be disabled in apoptotic leukocytes. Modulates bradykinin receptor BDKRB2 activation. Regulates bradykinin- and hyperosmotic shock-induced ERK1/2 activation in endothelial cells. Induces susceptibility to atherosclerosis. Its function is as follows. Does not protect against apoptosis. The protein is Platelet endothelial cell adhesion molecule (PECAM1) of Homo sapiens (Human).